Consider the following 293-residue polypeptide: N-acetylneuraminate lyase (293 aa).

Aceneuramate is bound by residues Ser-48 and Ser-49. Tyr-137 acts as the Proton donor in catalysis. The active-site Schiff-base intermediate with substrate is Lys-165. The aceneuramate site is built by Thr-167, Gly-189, Asp-191, Glu-192, and Ser-208.

It belongs to the DapA family. NanA subfamily. In terms of assembly, homotetramer.

It localises to the cytoplasm. The enzyme catalyses aceneuramate = aldehydo-N-acetyl-D-mannosamine + pyruvate. The protein operates within amino-sugar metabolism; N-acetylneuraminate degradation; D-fructose 6-phosphate from N-acetylneuraminate: step 1/5. Its function is as follows. Catalyzes the reversible aldol cleavage of N-acetylneuraminic acid (sialic acid; Neu5Ac) to form pyruvate and N-acetylmannosamine (ManNAc) via a Schiff base intermediate. This Staphylococcus carnosus (strain TM300) protein is N-acetylneuraminate lyase.